The chain runs to 78 residues: UPF0291 protein Exig_1097 (78 aa).

The interval 57 to 78 (EEGTDVTPEKLKQAQEEERNKQ) is disordered. A compositionally biased stretch (basic and acidic residues) spans 63–78 (TPEKLKQAQEEERNKQ).

This sequence belongs to the UPF0291 family.

The protein localises to the cytoplasm. The protein is UPF0291 protein Exig_1097 of Exiguobacterium sibiricum (strain DSM 17290 / CCUG 55495 / CIP 109462 / JCM 13490 / 255-15).